Here is a 341-residue protein sequence, read N- to C-terminus: Ribulose-5-phosphate reductase (341 aa).

Residues Cys-38, His-64, Glu-65, and Glu-144 each contribute to the Zn(2+) site.

This sequence belongs to the zinc-containing alcohol dehydrogenase family. Zn(2+) is required as a cofactor.

The catalysed reaction is D-ribitol 5-phosphate + NADP(+) = D-ribulose 5-phosphate + NADPH + H(+). The protein operates within cell wall biogenesis; poly(ribitol phosphate) teichoic acid biosynthesis. Its function is as follows. Catalyzes the NADPH dependent reduction of D-ribulose 5-phosphate to D-ribitol 5-phosphate. This chain is Ribulose-5-phosphate reductase, found in Bacillus spizizenii (strain ATCC 23059 / NRRL B-14472 / W23) (Bacillus subtilis subsp. spizizenii).